Here is a 689-residue protein sequence, read N- to C-terminus: MQNIEKINEEEAKKLLIELADKIAQYNHAYYIEDKPLVSDAEYDQLFNTNLKLEQKFPHLILENSPSKKIGAKVENKFAKVTHQVPMLSLSNVFDEEDVKDFLDRIKSFLRLDQFSPIFCEPKIDGLSFAATYKNGILTTGATRGDGYIGEDITANIKTIKDFPHKINNAPELLEVRGEIYIEKNDFTSLNQEQEQQGKDKFANPRNAAAGSLRQLDPSVTAKRPLKYFVYAIGSAKEELANSQDQLLAKFKELGFNVNEIGKLANSEEEIFSFYEYLKTNRKNLPYEIDGVVYKLNDFALQDRMGFIARSPRFATAHKFPAIIGQTKLLSITVQVGRTGTLTPVAELEPIEIGGVIVSRATLHNYQEIARKDVRVGDYVFLQRAGDVIPQITGVDLAKRSADATTFDPPLFCPSCNSKLHYVPEDIIIRCDNGLNCPAQNYERIRHFVSKNAMDIEGLGRKQVEFLIDKGLISNPYDIFFLKEKNEASLTKLENMDGWGKKSVENLFNNIEKSKNVSLPRFIYALGIRHIGEQNVKLLAREFGSYENFIAQMELLKENDPEIYQKLNNLDGIGDKMLVDIIDFFDVKENIELIKNLSEVLNIEDYKETREQSSLTGKIVVFTGSMPTLSRAEAKATAEKLGAKVAASVSSNTDLVIAGEDAGSKLKKAKELGIKIIDEAEWLTLVRDI.

NAD(+) is bound by residues 40–44 (DAEYD), 89–90 (SL), and Glu-121. The active-site N6-AMP-lysine intermediate is Lys-123. Residues Arg-144, Glu-179, Lys-295, and Lys-319 each coordinate NAD(+). Residues Cys-413, Cys-416, Cys-431, and Cys-437 each coordinate Zn(2+). The BRCT domain maps to 610-689 (REQSSLTGKI…AEWLTLVRDI (80 aa)).

Belongs to the NAD-dependent DNA ligase family. LigA subfamily. Mg(2+) is required as a cofactor. The cofactor is Mn(2+).

The enzyme catalyses NAD(+) + (deoxyribonucleotide)n-3'-hydroxyl + 5'-phospho-(deoxyribonucleotide)m = (deoxyribonucleotide)n+m + AMP + beta-nicotinamide D-nucleotide.. Functionally, DNA ligase that catalyzes the formation of phosphodiester linkages between 5'-phosphoryl and 3'-hydroxyl groups in double-stranded DNA using NAD as a coenzyme and as the energy source for the reaction. It is essential for DNA replication and repair of damaged DNA. The chain is DNA ligase from Rickettsia bellii (strain OSU 85-389).